We begin with the raw amino-acid sequence, 415 residues long: Serine hydroxymethyltransferase (415 aa).

Residues L117 and 121-123 (GHL) contribute to the (6S)-5,6,7,8-tetrahydrofolate site. The residue at position 226 (K226) is an N6-(pyridoxal phosphate)lysine. (6S)-5,6,7,8-tetrahydrofolate contacts are provided by residues E241 and 349–351 (SPF).

The protein belongs to the SHMT family. In terms of assembly, homodimer. The cofactor is pyridoxal 5'-phosphate.

Its subcellular location is the cytoplasm. The enzyme catalyses (6R)-5,10-methylene-5,6,7,8-tetrahydrofolate + glycine + H2O = (6S)-5,6,7,8-tetrahydrofolate + L-serine. It functions in the pathway one-carbon metabolism; tetrahydrofolate interconversion. Its pathway is amino-acid biosynthesis; glycine biosynthesis; glycine from L-serine: step 1/1. Functionally, catalyzes the reversible interconversion of serine and glycine with tetrahydrofolate (THF) serving as the one-carbon carrier. This reaction serves as the major source of one-carbon groups required for the biosynthesis of purines, thymidylate, methionine, and other important biomolecules. Also exhibits THF-independent aldolase activity toward beta-hydroxyamino acids, producing glycine and aldehydes, via a retro-aldol mechanism. This chain is Serine hydroxymethyltransferase, found in Trichlorobacter lovleyi (strain ATCC BAA-1151 / DSM 17278 / SZ) (Geobacter lovleyi).